The chain runs to 146 residues: Snaclec 1 (146 aa).

The first 23 residues, M1–A23, serve as a signal peptide directing secretion. 3 disulfide bridges follow: C25-C36, C53-C142, and C119-C134. Positions Y32–K143 constitute a C-type lectin domain.

It belongs to the snaclec family. Heterodimer; disulfide-linked. As to expression, expressed by the venom gland.

The protein resides in the secreted. In terms of biological role, interferes with one step of hemostasis (modulation of platelet aggregation, or coagulation cascade, for example). The protein is Snaclec 1 of Bitis arietans (African puff adder).